The sequence spans 232 residues: Large ribosomal subunit protein uL1 (232 aa).

This sequence belongs to the universal ribosomal protein uL1 family. Part of the 50S ribosomal subunit.

Binds directly to 23S rRNA. The L1 stalk is quite mobile in the ribosome, and is involved in E site tRNA release. Functionally, protein L1 is also a translational repressor protein, it controls the translation of the L11 operon by binding to its mRNA. The sequence is that of Large ribosomal subunit protein uL1 from Chlamydia pneumoniae (Chlamydophila pneumoniae).